Reading from the N-terminus, the 166-residue chain is Deglycase PfpI (166 aa).

Residues 1 to 166 (MKILFLSANE…WMREFVKLLK (166 aa)) enclose the PfpI endopeptidase domain. Residue C100 is the Nucleophile of the active site. H101 is a catalytic residue.

This sequence belongs to the peptidase C56 family. In terms of assembly, homooligomer. Exists in two functional species: the predominant form is a homohexamer that comprises about 90% of the total activity, and the minor form is trimeric.

It is found in the cytoplasm. It catalyses the reaction N(omega)-(1-hydroxy-2-oxopropyl)-L-arginyl-[protein] + H2O = lactate + L-arginyl-[protein] + H(+). The enzyme catalyses N(6)-(1-hydroxy-2-oxopropyl)-L-lysyl-[protein] + H2O = lactate + L-lysyl-[protein] + H(+). The catalysed reaction is S-(1-hydroxy-2-oxopropyl)-L-cysteinyl-[protein] + H2O = lactate + L-cysteinyl-[protein] + H(+). It carries out the reaction N(omega)-(1-hydroxy-2-oxoethyl)-L-arginyl-[protein] + H2O = L-arginyl-[protein] + glycolate + H(+). It catalyses the reaction N(6)-(1-hydroxy-2-oxoethyl)-L-lysyl-[protein] + H2O = glycolate + L-lysyl-[protein] + H(+). The enzyme catalyses S-(1-hydroxy-2-oxoethyl)-L-cysteinyl-[protein] + H2O = glycolate + L-cysteinyl-[protein] + H(+). Deglycase that catalyzes the deglycation of the Maillard adducts formed between amino groups of proteins and reactive carbonyl groups of glyoxals. Thus, functions as a protein deglycase that repairs methylglyoxal- and glyoxal-glycated proteins, and releases repaired proteins and lactate or glycolate, respectively. Deglycates cysteine, arginine and lysine residues in proteins, and thus reactivates these proteins by reversing glycation by glyoxals. Thus, was shown to afford full protection against glycation of thioredoxin by glyoxal. Acts on early glycation intermediates (hemithioacetals and aminocarbinols), preventing the formation of advanced glycation endproducts (AGE) that cause irreversible damage. Prevents acrylamide formation in asparagine/glyoxal and asparagine/sugar mixtures, likely by degrading asparagine/glyoxal Maillard adducts formed at high temperatures. Also displays proteolytic activity. Cleaves at the carboxyl side of both basic and hydrophobic residues in the P1 position, indicating trypsin- and chymotrypsin-like specificities. The protein is Deglycase PfpI of Pyrococcus furiosus (strain ATCC 43587 / DSM 3638 / JCM 8422 / Vc1).